We begin with the raw amino-acid sequence, 211 residues long: N-(5'-phosphoribosyl)anthranilate isomerase (211 aa).

The protein belongs to the TrpF family.

It carries out the reaction N-(5-phospho-beta-D-ribosyl)anthranilate = 1-(2-carboxyphenylamino)-1-deoxy-D-ribulose 5-phosphate. It functions in the pathway amino-acid biosynthesis; L-tryptophan biosynthesis; L-tryptophan from chorismate: step 3/5. This Desulfovibrio desulfuricans (strain ATCC 27774 / DSM 6949 / MB) protein is N-(5'-phosphoribosyl)anthranilate isomerase.